Here is a 39-residue protein sequence, read N- to C-terminus: Cecropin-D-like peptide (39 aa).

As to expression, hemolymph.

Its subcellular location is the secreted. Cecropins have lytic and antibacterial activity against several Gram-positive and Gram-negative bacteria. Has antibacterial activity against the Gram-positive bacteria M.luteus (MIC=34.4 uM), L.monocytogenes (MIC=34.4 uM), and S.lutea (MIC=34.4 uM), and the Gram-negative bacterium E.coli D31 (MIC=8.6 uM). Lacks antibacterial activity against the Gram-positive bacterium B.circulans, and the Gram-negative bacteria E.coli ATCC 25922 and S.typhimurium. Has antifungal activity against A.niger, but lacks antifungal activity against C.albicans, C.wickerhamii, F.oxysporum, P.pastoris, P.tannophilus, S.cerevisiae, T.harzianum, and Z.marxianus. This chain is Cecropin-D-like peptide, found in Galleria mellonella (Greater wax moth).